We begin with the raw amino-acid sequence, 441 residues long: MSTMTPREIVSELDAYIIGQSEAKRAVAIALRNRWRRMQLPEELRQEVTPKNILMIGPTGVGKTEIARRLAKLANAPFVKVEATKFTEVGYVGKEVDTIIRDLTDMAVKQIRKIEVEKNRMKAQDAAEERILDILLPRAKNKWGETEYEKDSATRQVFRKKLREGALDDSEIEVDISSQMNVEIMTPPGMEEMTSQLQSLFEGLSPSHSKKRRMKVKDAMKVLIDDEAAKLVNNEDLKQKAIESVEQNGIVFIDEIDKICKQSDRGGADVSREGVQRDLLPIIEGSTVNTKHGMVKTDHILFICSGAFQVARPSDLLPELQGRLPIRVELKSLTKEDFERILTEPSASLTLQYKELMKTEGVTVEFTPDGISKIAEAAFHVNEKTENIGARRLHTVLERLMDGISFDASERSGESVVIDEKYVSEVLNDVVDNEDLSRFIL.

ATP contacts are provided by residues isoleucine 18, 60–65 (GVGKTE), aspartate 254, glutamate 319, and arginine 391.

It belongs to the ClpX chaperone family. HslU subfamily. A double ring-shaped homohexamer of HslV is capped on each side by a ring-shaped HslU homohexamer. The assembly of the HslU/HslV complex is dependent on binding of ATP.

It localises to the cytoplasm. ATPase subunit of a proteasome-like degradation complex; this subunit has chaperone activity. The binding of ATP and its subsequent hydrolysis by HslU are essential for unfolding of protein substrates subsequently hydrolyzed by HslV. HslU recognizes the N-terminal part of its protein substrates and unfolds these before they are guided to HslV for hydrolysis. The polypeptide is ATP-dependent protease ATPase subunit HslU (Actinobacillus succinogenes (strain ATCC 55618 / DSM 22257 / CCUG 43843 / 130Z)).